A 131-amino-acid polypeptide reads, in one-letter code: Class I hydrophobin 9 (131 aa).

Positions 1–23 are cleaved as a signal peptide; it reads MFARRAISIFAFMLVALSIFAAA. 4 disulfide bridges follow: Cys-52–Cys-112, Cys-59–Cys-106, Cys-60–Cys-93, and Cys-113–Cys-126. Residue Asn-53 is glycosylated (N-linked (GlcNAc...) asparagine). An N-linked (GlcNAc...) asparagine glycan is attached at Asn-115.

This sequence belongs to the fungal hydrophobin family. Self-assembles to form functional amyloid fibrils called rodlets. Self-assembly into fibrillar rodlets occurs spontaneously at hydrophobic:hydrophilic interfaces and the rodlets further associate laterally to form amphipathic monolayers.

It is found in the secreted. The protein localises to the cell wall. Functionally, aerial growth, conidiation, and dispersal of filamentous fungi in the environment rely upon a capability of their secreting small amphipathic proteins called hydrophobins (HPBs) with low sequence identity. Class I can self-assemble into an outermost layer of rodlet bundles on aerial cell surfaces, conferring cellular hydrophobicity that supports fungal growth, development and dispersal; whereas Class II form highly ordered films at water-air interfaces through intermolecular interactions but contribute nothing to the rodlet structure. The chain is Class I hydrophobin 9 from Flammulina velutipes (Agaricus velutipes).